Here is a 624-residue protein sequence, read N- to C-terminus: Kelch-like ECH-associated protein 1 (624 aa).

Residue Cys38 is modified to S-(2-succinyl)cysteine. The region spanning Cys77–Glu149 is the BTB domain. Residue Arg135 forms an N5-[4-(S-L-cysteinyl)-5-methyl-1H-imidazol-2-yl]-L-ornithine (Arg-Cys) (interchain with C-151 in KEAP1) linkage. S-(2-succinyl)cysteine occurs at positions 151 and 241. Residue Cys151 is modified to S-(2,3-dicarboxypropyl)cysteine; alternate. Position 151 is an S-nitrosocysteine; alternate (Cys151). Cys151 participates in a covalent cross-link: N5-[4-(S-L-cysteinyl)-5-methyl-1H-imidazol-2-yl]-L-ornithine (Cys-Arg) (interchain with R-135 in KEAP1). Residues Ala184–Gln286 enclose the BACK domain. Cys257 and Cys273 each carry S-(2,3-dicarboxypropyl)cysteine. An S-(2-succinyl)cysteine mark is found at Cys288 and Cys319. Residue Cys288 is modified to S-(2,3-dicarboxypropyl)cysteine; alternate. 6 Kelch repeats span residues Leu327–Gly372, Leu373–Gly423, His424–Arg470, Leu471–Asn517, Cys518–Gly564, and Arg565–Glu611. Cys434 carries the post-translational modification S-cGMP-cysteine. Cys613 is subject to S-(2-succinyl)cysteine.

It belongs to the KEAP1 family. In terms of assembly, component of the BCR(KEAP1) E3 ubiquitin ligase complex, at least composed of 2 molecules of CUL3, 2 molecules of KEAP1, and RBX1. Interacts with NFE2L2/NRF2; the interaction is direct. Forms a ternary complex with NFE2L2/NRF2 and PGAM5. Interacts with (phosphorylated) SQSTM1/p62; the interaction is direct and inactivates the BCR(KEAP1) complex by sequestering it in inclusion bodies, promoting its degradation. Interacts with NFE2L1. Interacts with BPTF and PTMA. Interacts with MAP1LC3B. Interacts indirectly with ENC1. Interacts with SESN1 and SESN2. Interacts with HSP90AA1 and HSP90AB1. Interacts with PGCKA1; this interaction prevents the ubiquitination of KEAP1 by TRIM25, thus protecting KEAP1 from degradation. In terms of processing, non-enzymatic covalent modifications of reactive cysteines by electrophile metabolites inactivate the BCR(KEAP1) complex. Accumulation of fumarate promotes the formation of cysteine S-succination (S-(2-succinyl)cysteine), leading to inactivate the BCR(KEAP1) complex and promote NFE2L2/NRF2 nuclear accumulation and activation. Nitric oxide-dependent 8-Nitro-cGMP formation promotes cysteine guanylation (S-cGMP-cysteine), leading to NFE2L2/NRF2 nuclear accumulation and activation. Itaconate, an anti-inflammatory metabolite generated in response to lipopolysaccharide, alkylates cysteines, activating NFE2L2/NRF2. Methylglyoxal, a reactive metabolite that accumulates when the glycolytic enzyme PGK1 is inhibited, promotes formation of a methylimidazole cross-link between proximal Cys-151 and Arg-135 on another KEAP1 molecule, resulting in an inactive dimer that inactivates the BCR(KEAP1) complex. Degraded via a proteasomal-independent process during selective autophagy: interaction with phosphorylated SQSTM1/p62 sequesters KEAP1 in inclusion bodies, leading to its degradation. Post-translationally, auto-ubiquitinated by the BCR(KEAP1) complex. Quinone-induced oxidative stress, but not sulforaphane, increases its ubiquitination. Ubiquitination and subsequent degradation is most pronounced following prolonged exposure of cells to oxidative stress, particularly in glutathione-deficient cells that are highly susceptible to oxidative stress. Deubiquitinated by USP25; leading to stabilization. Ubiquitinated by TRIM25; leading to degradation upon ER stress.

The protein localises to the cytoplasm. Its subcellular location is the nucleus. Its pathway is protein modification; protein ubiquitination. With respect to regulation, ubiquitin ligase activity of the BCR(KEAP1) complex is inhibited by oxidative stress and electrophile metabolites such as sulforaphane. Electrophile metabolites react with reactive cysteine residues in KEAP1 and trigger non-enzymatic covalent modifications of these cysteine residues, leading to inactivate the ubiquitin ligase activity of the BCR(KEAP1) complex. Selective autophagy also inactivates the BCR(KEAP1) complex via interaction between KEAP1 and SQSTM1/p62, which sequesters the complex in inclusion bodies and promotes its degradation. In terms of biological role, substrate-specific adapter of a BCR (BTB-CUL3-RBX1) E3 ubiquitin ligase complex that regulates the response to oxidative stress by targeting NFE2L2/NRF2 for ubiquitination. KEAP1 acts as a key sensor of oxidative and electrophilic stress: in normal conditions, the BCR(KEAP1) complex mediates ubiquitination and degradation of NFE2L2/NRF2, a transcription factor regulating expression of many cytoprotective genes. In response to oxidative stress, different electrophile metabolites trigger non-enzymatic covalent modifications of highly reactive cysteine residues in KEAP1, leading to inactivate the ubiquitin ligase activity of the BCR(KEAP1) complex, promoting NFE2L2/NRF2 nuclear accumulation and expression of phase II detoxifying enzymes. In response to selective autophagy, KEAP1 is sequestered in inclusion bodies following its interaction with SQSTM1/p62, leading to inactivation of the BCR(KEAP1) complex and activation of NFE2L2/NRF2. The BCR(KEAP1) complex also mediates ubiquitination of SQSTM1/p62, increasing SQSTM1/p62 sequestering activity and degradation. The BCR(KEAP1) complex also targets BPTF and PGAM5 for ubiquitination and degradation by the proteasome. The protein is Kelch-like ECH-associated protein 1 of Pongo abelii (Sumatran orangutan).